We begin with the raw amino-acid sequence, 91 residues long: Small ribosomal subunit protein uS19 (91 aa).

It belongs to the universal ribosomal protein uS19 family.

Its function is as follows. Protein S19 forms a complex with S13 that binds strongly to the 16S ribosomal RNA. The sequence is that of Small ribosomal subunit protein uS19 from Synechococcus sp. (strain CC9902).